Reading from the N-terminus, the 1526-residue chain is uncharacterized protein (1526 aa).

WD repeat units follow at residues 334 to 376 (CTKE…EHIS), 862 to 901 (KILG…ELLT), 904 to 945 (GHNS…KTFK), 946 to 985 (GHTS…CLYI), 988 to 1027 (GHTG…CFYI), 1030 to 1069 (GHTS…CLYT), 1072 to 1111 (GHTS…CLYT), 1114 to 1153 (GYTS…CLYT), 1156 to 1195 (GHTN…CLYI), 1198 to 1237 (GHTS…CLCT), 1240 to 1279 (GHTS…CLHT), 1282 to 1321 (GHTN…CLHT), 1324 to 1363 (GHTS…CLYT), 1366 to 1405 (GHTN…CLYT), 1408 to 1447 (GHNN…CLYT), and 1450 to 1491 (GHIN…KTLK). The Pentapeptide repeat domain maps to 823-862 (MVLEGRDLSHTVIIGADFTNTSLRCVNFTEANLAYSVFTK).

This is an uncharacterized protein from Nostoc sp. (strain PCC 7120 / SAG 25.82 / UTEX 2576).